A 150-amino-acid polypeptide reads, in one-letter code: MSLNQKKKACIFPGTFEVFHDGHLNILKRALKLFDFVYIVVAINNTKTSSDLEKRYQKVEEKIDSLSIKNVEVIKWDSKISDFAKIKTIYFIIRGIRDVNDFKFEKYIADIYKQEWDKLEVVYFFSEKKLENISSRKIINLNKGKNDYEN.

A substrate-binding site is contributed by threonine 15. ATP is bound by residues 15–16 (TF) and histidine 23. Isoleucine 80 and arginine 94 together coordinate substrate. ATP-binding positions include 95 to 97 (GIR), glutamate 105, and 130 to 136 (LENISSR).

The protein belongs to the bacterial CoaD family. Homohexamer. It depends on Mg(2+) as a cofactor.

The protein resides in the cytoplasm. The catalysed reaction is (R)-4'-phosphopantetheine + ATP + H(+) = 3'-dephospho-CoA + diphosphate. Its pathway is cofactor biosynthesis; coenzyme A biosynthesis; CoA from (R)-pantothenate: step 4/5. In terms of biological role, reversibly transfers an adenylyl group from ATP to 4'-phosphopantetheine, yielding dephospho-CoA (dPCoA) and pyrophosphate. The chain is Phosphopantetheine adenylyltransferase from Malacoplasma penetrans (strain HF-2) (Mycoplasma penetrans).